Reading from the N-terminus, the 310-residue chain is Olfactory receptor 1496 (310 aa).

Residues 1–23 (MNNQTFITQFLLLGLPIPEEHQH) are Extracellular-facing. Asn3 carries N-linked (GlcNAc...) asparagine glycosylation. A helical transmembrane segment spans residues 24-48 (LFYALFLVMYLTTILGNLLIIVLVQ). Residues 49–55 (LDSQLHT) lie on the Cytoplasmic side of the membrane. A helical transmembrane segment spans residues 56–77 (PMYLFLSNLSFSDLCFSSVTMP). At 78–98 (KLLQNMRSQDTSIPYGGCLAQ) the chain is on the extracellular side. An intrachain disulfide couples Cys95 to Cys187. Residues 99–118 (TYFFMVFGDMESFLLVAMAY) traverse the membrane as a helical segment. At 119–137 (DRYVAICFPLHYTSIMSPK) the chain is on the cytoplasmic side. The helical transmembrane segment at 138–156 (LCTCLVLLLWMLTTSHAMM) threads the bilayer. Over 157–194 (HTLLAARLSFCENNVVLNFFCDLFVLLKLACSDTYINE) the chain is Extracellular. The helical transmembrane segment at 195–217 (LMIFIMSTLLIIIPFFLIVMSYA) threads the bilayer. At 218 to 234 (RIISSILKVPSTQGICK) the chain is on the cytoplasmic side. The helical transmembrane segment at 235 to 258 (VFSTCGSHLSVVSLFYGTIIGLYL) threads the bilayer. The Extracellular segment spans residues 259-270 (CPAGNNSTVKEM). Residues 271 to 290 (VMAMMYTVVTPMLNPFIYSL) form a helical membrane-spanning segment. The Cytoplasmic segment spans residues 291–310 (RNRDMKRALIRVICSMKITL).

The protein belongs to the G-protein coupled receptor 1 family. In terms of tissue distribution, olfactory epithelium.

Its subcellular location is the cell membrane. Its function is as follows. Odorant receptor. The chain is Olfactory receptor 1496 (Olr1496) from Rattus norvegicus (Rat).